The following is a 399-amino-acid chain: MDSKGRNVIVCDNGTGFVKCGYAGSNFPTHIFPSMVGRPMIRAVNKIGDIEVKDLHVDDLMVGDEASQLRSLLEVSYPMENGVVRNWDDMCHVWDYTFGPKKMDIDPTNTKILLTEPPMNPTKNREKMIEVMFEKYGFDSAYIAIQAVLTLYAQGLISGVVIDSGDGVTHICPVYEEFALPHLTRRLDIAGRDITRYLIKLLLLRGYAFNHSADFETVRIMKEKLCYIGYDIEMEQRLALETTVLVESYTLPDGRVIKVGGERFEAPEALFQPHLINVEGPGIAELAFNTIQAADIDIRPELYKHIVLSGGSTMYPGLPSRLEREIKQLYLERVLKNDTEKLAKFKIRIEDPPRRKDMVFIGGAVLAEVTKDRDGFWMSKQEYQEQGLKVLQKLQKISH.

Residues 165–167 (GDG), 219–223 (RIMKE), and 310–315 (GGSTMY) each bind ATP.

Belongs to the actin family. ARP2 subfamily. As to quaternary structure, component of the Arp2/3 complex.

The protein resides in the cytoplasm. It is found in the cytoskeleton. Its function is as follows. Functions as ATP-binding component of the Arp2/3 complex which is involved in regulation of actin polymerization and together with an activating nucleation-promoting factor (NPF) mediates the formation of branched actin networks. Seems to contact the pointed end of the daughter actin filament. In Drosophila melanogaster (Fruit fly), this protein is Actin-related protein 2 (Arp2).